A 206-amino-acid chain; its full sequence is LysM and putative peptidoglycan-binding domain-containing protein 2 (206 aa).

The region spanning 59–103 is the LysM domain; that stretch reads IEHCLSPSDTLQGIALKYGVTMEQIKRANKLFSTDCIFLRKSLNI. The disordered stretch occupies residues 184–206; the sequence is AQRLKEEDDLRHDGSYATCSYQH. The segment covering 186–197 has biased composition (basic and acidic residues); that stretch reads RLKEEDDLRHDG.

The chain is LysM and putative peptidoglycan-binding domain-containing protein 2 (lysmd2) from Xenopus laevis (African clawed frog).